Reading from the N-terminus, the 515-residue chain is tRNA-2-methylthio-N(6)-dimethylallyladenosine synthase (515 aa).

The 116-residue stretch at 25 to 140 (KTYQVRTFGC…LPALLNRARH (116 aa)) folds into the MTTase N-terminal domain. [4Fe-4S] cluster-binding residues include Cys-34, Cys-69, Cys-103, Cys-177, Cys-181, and Cys-184. The Radical SAM core domain occupies 163–393 (RDSVYAGWVS…TALQDRIAAE (231 aa)). The region spanning 396 to 466 (AKQLGRKVEV…AFHLVADPAG (71 aa)) is the TRAM domain. A disordered region spans residues 482 to 515 (DRSQADSCGVPAAGAASGKAGVSLGMPSLPTRRA). Residues 490-506 (GVPAAGAASGKAGVSLG) are compositionally biased toward low complexity.

The protein belongs to the methylthiotransferase family. MiaB subfamily. In terms of assembly, monomer. [4Fe-4S] cluster serves as cofactor.

Its subcellular location is the cytoplasm. It carries out the reaction N(6)-dimethylallyladenosine(37) in tRNA + (sulfur carrier)-SH + AH2 + 2 S-adenosyl-L-methionine = 2-methylsulfanyl-N(6)-dimethylallyladenosine(37) in tRNA + (sulfur carrier)-H + 5'-deoxyadenosine + L-methionine + A + S-adenosyl-L-homocysteine + 2 H(+). Functionally, catalyzes the methylthiolation of N6-(dimethylallyl)adenosine (i(6)A), leading to the formation of 2-methylthio-N6-(dimethylallyl)adenosine (ms(2)i(6)A) at position 37 in tRNAs that read codons beginning with uridine. The sequence is that of tRNA-2-methylthio-N(6)-dimethylallyladenosine synthase from Paenarthrobacter aurescens (strain TC1).